The primary structure comprises 175 residues: B9 domain-containing protein 2 (175 aa).

In terms of domain architecture, C2 B9-type spans 2-118 (AEVHVIGQII…ACPTWRPLGS (117 aa)).

It belongs to the B9D family. As to quaternary structure, part of the tectonic-like complex (also named B9 complex). Interacts with TUBG1.

The protein localises to the cytoplasm. It localises to the cytoskeleton. The protein resides in the cilium basal body. Its subcellular location is the cilium axoneme. It is found in the nucleus. In terms of biological role, component of the tectonic-like complex, a complex localized at the transition zone of primary cilia and acting as a barrier that prevents diffusion of transmembrane proteins between the cilia and plasma membranes. This Homo sapiens (Human) protein is B9 domain-containing protein 2 (B9D2).